The sequence spans 595 residues: Probable Xaa-Pro aminopeptidase CHGG_02942 (595 aa).

The tract at residues 51–76 (KSGPSSSNLSPSTLSTEKTSSDSSGV) is disordered. Positions 52–66 (SGPSSSNLSPSTLST) are enriched in low complexity. Mn(2+) contacts are provided by Asp334, Asp345, Glu541, and Glu563.

It belongs to the peptidase M24B family. It depends on Mn(2+) as a cofactor.

The catalysed reaction is Release of any N-terminal amino acid, including proline, that is linked to proline, even from a dipeptide or tripeptide.. Catalyzes the removal of a penultimate prolyl residue from the N-termini of peptides. In Chaetomium globosum (strain ATCC 6205 / CBS 148.51 / DSM 1962 / NBRC 6347 / NRRL 1970) (Soil fungus), this protein is Probable Xaa-Pro aminopeptidase CHGG_02942.